Here is a 252-residue protein sequence, read N- to C-terminus: Adenosylcobinamide-GDP ribazoletransferase (252 aa).

A run of 6 helical transmembrane segments spans residues Leu-29–Val-49, Gly-50–Leu-70, Val-104–Val-124, Phe-129–Leu-149, Phe-166–Leu-186, and Phe-194–Val-214.

Belongs to the CobS family. The cofactor is Mg(2+).

It localises to the cell inner membrane. The catalysed reaction is alpha-ribazole + adenosylcob(III)inamide-GDP = adenosylcob(III)alamin + GMP + H(+). It catalyses the reaction alpha-ribazole 5'-phosphate + adenosylcob(III)inamide-GDP = adenosylcob(III)alamin 5'-phosphate + GMP + H(+). It functions in the pathway cofactor biosynthesis; adenosylcobalamin biosynthesis; adenosylcobalamin from cob(II)yrinate a,c-diamide: step 7/7. Joins adenosylcobinamide-GDP and alpha-ribazole to generate adenosylcobalamin (Ado-cobalamin). Also synthesizes adenosylcobalamin 5'-phosphate from adenosylcobinamide-GDP and alpha-ribazole 5'-phosphate. The sequence is that of Adenosylcobinamide-GDP ribazoletransferase from Chlorobium chlorochromatii (strain CaD3).